The sequence spans 433 residues: Adenosylhomocysteinase B (433 aa).

Thr57, Asp132, Glu157, Lys187, and Asp191 together coordinate substrate. The NAD binding stretch occupies residues 184–351 (SVTKSKFDNL…EGRLVNLGCA (168 aa)).

The protein belongs to the adenosylhomocysteinase family. In terms of assembly, homotetramer. It depends on NAD(+) as a cofactor.

Its subcellular location is the cytoplasm. The enzyme catalyses S-adenosyl-L-homocysteine + H2O = L-homocysteine + adenosine. Its pathway is amino-acid biosynthesis; L-homocysteine biosynthesis; L-homocysteine from S-adenosyl-L-homocysteine: step 1/1. In terms of biological role, catalyzes the hydrolysis of S-adenosyl-L-homocysteine to form adenosine and homocysteine. Binds copper ions. The protein is Adenosylhomocysteinase B (ahcy-b) of Xenopus laevis (African clawed frog).